We begin with the raw amino-acid sequence, 116 residues long: Nitrogen regulatory PII-like protein (116 aa).

This sequence belongs to the P(II) protein family. As to quaternary structure, needs to interact with NrgA in order to localize correctly to the membrane.

Its subcellular location is the cell membrane. Required for full induction of the nrgAB operon under conditions of ammonium limitation. In Bacillus subtilis (strain 168), this protein is Nitrogen regulatory PII-like protein (nrgB).